Here is a 95-residue protein sequence, read N- to C-terminus: Co-chaperonin GroES (95 aa).

The protein belongs to the GroES chaperonin family. As to quaternary structure, heptamer of 7 subunits arranged in a ring. Interacts with the chaperonin GroEL.

The protein resides in the cytoplasm. In terms of biological role, together with the chaperonin GroEL, plays an essential role in assisting protein folding. The GroEL-GroES system forms a nano-cage that allows encapsulation of the non-native substrate proteins and provides a physical environment optimized to promote and accelerate protein folding. GroES binds to the apical surface of the GroEL ring, thereby capping the opening of the GroEL channel. This chain is Co-chaperonin GroES, found in Nitratidesulfovibrio vulgaris (strain DSM 19637 / Miyazaki F) (Desulfovibrio vulgaris).